Reading from the N-terminus, the 1453-residue chain is Scavenger receptor cysteine-rich type 1 protein M160 (1453 aa).

The signal sequence occupies residues 1–40 (MMLPQNSWHIDFGRCCCHQNLFSAVVTCILLLNSCFLISS). Residues 41 to 1359 (FNGTDLELRL…LKSLNASSGH (1319 aa)) lie on the Extracellular side of the membrane. Asn-42, Asn-78, Asn-120, and Asn-161 each carry an N-linked (GlcNAc...) asparagine glycan. SRCR domains lie at 48–148 (LRLV…VNCY), 155–255 (LRLV…LTCY), 262–362 (LRLV…VICS), 369–469 (LRLA…VICS), 476–576 (LRLV…VTCS), 583–683 (LRLV…VICS), 690–790 (LRLV…LICS), 795–895 (PRLV…VVCS), and 900–1000 (VRLV…VICT). 3 disulfides stabilise this stretch: Cys-73-Cys-137, Cys-86-Cys-147, and Cys-117-Cys-127. 6 disulfides stabilise this stretch: Cys-180/Cys-244, Cys-193/Cys-254, Cys-224/Cys-234, Cys-287/Cys-351, Cys-300/Cys-361, and Cys-331/Cys-341. Residues Asn-334, Asn-377, Asn-441, Asn-548, and Asn-637 are each glycosylated (N-linked (GlcNAc...) asparagine). Disulfide bonds link Cys-394-Cys-458, Cys-407-Cys-468, Cys-438-Cys-448, Cys-501-Cys-565, Cys-514-Cys-575, Cys-545-Cys-555, Cys-608-Cys-672, Cys-621-Cys-682, Cys-652-Cys-662, Cys-715-Cys-779, Cys-728-Cys-789, Cys-759-Cys-769, Cys-820-Cys-884, Cys-833-Cys-894, Cys-864-Cys-874, Cys-925-Cys-989, Cys-938-Cys-999, and Cys-969-Cys-979. Residues Asn-972, Asn-1013, Asn-1084, and Asn-1104 are each glycosylated (N-linked (GlcNAc...) asparagine). 3 SRCR domains span residues 1036 to 1136 (LRLV…VICS), 1141 to 1243 (LRLY…ITCE), and 1246 to 1346 (IRVR…VRCS). Cystine bridges form between Cys-1061/Cys-1125, Cys-1074/Cys-1135, and Cys-1105/Cys-1115. 2 N-linked (GlcNAc...) asparagine glycosylation sites follow: Asn-1161 and Asn-1171. 5 disulfide bridges follow: Cys-1181–Cys-1242, Cys-1212–Cys-1222, Cys-1271–Cys-1335, Cys-1284–Cys-1345, and Cys-1315–Cys-1325. N-linked (GlcNAc...) asparagine glycosylation is found at Asn-1318 and Asn-1354. A helical membrane pass occupies residues 1360–1380 (LALILSSIFGLLLLVLFILFL). At 1381 to 1453 (TWCRVQKQKH…GVLPASEATK (73 aa)) the chain is on the cytoplasmic side. Positions 1418 to 1435 (EDPHGTRTSDDTPNHGCE) are enriched in basic and acidic residues. Residues 1418-1453 (EDPHGTRTSDDTPNHGCEDASDTSLLGVLPASEATK) are disordered.

Isoform 1 is highly expressed in the spleen, lymph nodes, thymus, and fetal liver and weakly expressed in bone marrow and no expression was found in peripheral blood leukocytes. Isoform 1 expression is restricted to the monocyte and macrophage cell lines. Isoform 2 is only expressed in spleen.

The protein localises to the cell membrane. Its subcellular location is the secreted. This Homo sapiens (Human) protein is Scavenger receptor cysteine-rich type 1 protein M160 (CD163L1).